The chain runs to 293 residues: 33 kDa chaperonin (293 aa).

2 disulfides stabilise this stretch: cysteine 229/cysteine 231 and cysteine 262/cysteine 265.

This sequence belongs to the HSP33 family. Under oxidizing conditions two disulfide bonds are formed involving the reactive cysteines. Under reducing conditions zinc is bound to the reactive cysteines and the protein is inactive.

It is found in the cytoplasm. Its function is as follows. Redox regulated molecular chaperone. Protects both thermally unfolding and oxidatively damaged proteins from irreversible aggregation. Plays an important role in the bacterial defense system toward oxidative stress. The sequence is that of 33 kDa chaperonin from Methylobacillus flagellatus (strain ATCC 51484 / DSM 6875 / VKM B-1610 / KT).